Consider the following 444-residue polypeptide: Serine--tRNA ligase (444 aa).

249 to 251 (TAE) serves as a coordination point for L-serine. ATP contacts are provided by residues 280–282 (RRE) and V296. E303 lines the L-serine pocket. Position 367–370 (367–370 (EIVS)) interacts with ATP. Residue T401 coordinates L-serine.

Belongs to the class-II aminoacyl-tRNA synthetase family. Type-1 seryl-tRNA synthetase subfamily. As to quaternary structure, homodimer. The tRNA molecule binds across the dimer.

Its subcellular location is the cytoplasm. The catalysed reaction is tRNA(Ser) + L-serine + ATP = L-seryl-tRNA(Ser) + AMP + diphosphate + H(+). It catalyses the reaction tRNA(Sec) + L-serine + ATP = L-seryl-tRNA(Sec) + AMP + diphosphate + H(+). It functions in the pathway aminoacyl-tRNA biosynthesis; selenocysteinyl-tRNA(Sec) biosynthesis; L-seryl-tRNA(Sec) from L-serine and tRNA(Sec): step 1/1. Catalyzes the attachment of serine to tRNA(Ser). Is also able to aminoacylate tRNA(Sec) with serine, to form the misacylated tRNA L-seryl-tRNA(Sec), which will be further converted into selenocysteinyl-tRNA(Sec). The polypeptide is Serine--tRNA ligase (Picrophilus torridus (strain ATCC 700027 / DSM 9790 / JCM 10055 / NBRC 100828 / KAW 2/3)).